Reading from the N-terminus, the 307-residue chain is Murein tetrapeptide carboxypeptidase (307 aa).

Ser115 acts as the Nucleophile in catalysis. Residues Glu217 and His285 each act as charge relay system in the active site.

It belongs to the peptidase S66 family. As to quaternary structure, homodimer.

It localises to the cytoplasm. The catalysed reaction is N-acetyl-D-glucosaminyl-N-acetylmuramoyl-L-alanyl-meso-2,6-diaminoheptanedioyl-D-alanine + H2O = N-acetyl-D-glucosaminyl-N-acetylmuramoyl-L-alanyl-meso-2,6-diaminoheptanedioate + D-alanine. The protein operates within cell wall biogenesis; peptidoglycan recycling. Releases the terminal D-alanine residue from the cytoplasmic disaccharide-tetrapeptide GlcNAc-MurNAc-L-Ala-gamma-D-Glu-meso-Dap-D-Ala, which is a murein turnover product. Probably also act on free tetrapetide. May be involved in murein recycling. The polypeptide is Murein tetrapeptide carboxypeptidase (Pseudomonas aeruginosa (strain ATCC 15692 / DSM 22644 / CIP 104116 / JCM 14847 / LMG 12228 / 1C / PRS 101 / PAO1)).